We begin with the raw amino-acid sequence, 424 residues long: Serine--tRNA ligase (424 aa).

233–235 contacts L-serine; sequence TAE. ATP is bound at residue 264–266; sequence RRE. Glutamate 287 provides a ligand contact to L-serine. 351 to 354 contacts ATP; sequence EISS. Serine 387 provides a ligand contact to L-serine.

This sequence belongs to the class-II aminoacyl-tRNA synthetase family. Type-1 seryl-tRNA synthetase subfamily. In terms of assembly, homodimer. The tRNA molecule binds across the dimer.

It is found in the cytoplasm. It carries out the reaction tRNA(Ser) + L-serine + ATP = L-seryl-tRNA(Ser) + AMP + diphosphate + H(+). The enzyme catalyses tRNA(Sec) + L-serine + ATP = L-seryl-tRNA(Sec) + AMP + diphosphate + H(+). The protein operates within aminoacyl-tRNA biosynthesis; selenocysteinyl-tRNA(Sec) biosynthesis; L-seryl-tRNA(Sec) from L-serine and tRNA(Sec): step 1/1. Catalyzes the attachment of serine to tRNA(Ser). Is also able to aminoacylate tRNA(Sec) with serine, to form the misacylated tRNA L-seryl-tRNA(Sec), which will be further converted into selenocysteinyl-tRNA(Sec). The protein is Serine--tRNA ligase of Cyanothece sp. (strain PCC 7425 / ATCC 29141).